The following is a 162-amino-acid chain: Ecotin (162 aa).

The N-terminal stretch at 1 to 18 (MFVPAVVFAALASTSAWA) is a signal peptide. C70 and C107 form a disulfide bridge.

The protein belongs to the protease inhibitor I11 (ecotin) family. In terms of assembly, homodimer.

The protein localises to the periplasm. Its function is as follows. General inhibitor of pancreatic serine proteases: inhibits chymotrypsin, trypsin, elastases, factor X, kallikrein as well as a variety of other proteases. The chain is Ecotin from Salmonella choleraesuis (strain SC-B67).